Reading from the N-terminus, the 422-residue chain is Protein phosphatase methylesterase 1 (422 aa).

Residues 1-27 (MSDMFRKSVLNKLPHLPPTRAPWADES) are disordered. Catalysis depends on residues Ser207, Asp234, and His371.

The protein belongs to the AB hydrolase superfamily.

It catalyses the reaction [phosphatase 2A protein]-C-terminal L-leucine methyl ester + H2O = [phosphatase 2A protein]-C-terminal L-leucine + methanol + H(+). Demethylates proteins that have been reversibly carboxymethylated. Demethylates the phosphatase PP2A catalytic subunit. The chain is Protein phosphatase methylesterase 1 (PPE1) from Cryptococcus neoformans var. neoformans serotype D (strain JEC21 / ATCC MYA-565) (Filobasidiella neoformans).